Reading from the N-terminus, the 259-residue chain is Dysbindin domain-containing protein 2 (259 aa).

Disordered stretches follow at residues 27-56 and 174-259; these read SCER…PVSR and ADVF…GACS. Over residues 32–46 the composition is skewed to pro residues; that stretch reads SPPPPLPHFRLPPLP. Residues 205–223 are compositionally biased toward low complexity; sequence TSDRTTSRTSSSSSSDSST. A phosphoserine mark is found at S217 and S218. T237 is subject to Phosphothreonine. Position 242 is a phosphoserine (S242).

The protein belongs to the dysbindin family. As to quaternary structure, monomer. Interacts with CSNK1D and CSNK1E. Detected in brain.

Its function is as follows. May modulate the activity of casein kinase-1. Inhibits CSNK1D autophosphorylation (in vitro). This is Dysbindin domain-containing protein 2 (DBNDD2) from Homo sapiens (Human).